The following is a 322-amino-acid chain: Probable heme-iron transport system permease protein IsdF (322 aa).

The next 9 membrane-spanning stretches (helical) occupy residues 9–29 (LLFL…FVTG), 61–81 (ILIA…LQAA), 89–109 (ANII…MLFI), 114–134 (FYLP…IILL), 143–163 (VSMI…LEIL), 179–199 (IWSD…LTLL), 233–253 (VFLA…GIIV), 267–287 (VLIP…DLLG), and 294–314 (LEIP…IYLI).

The protein belongs to the binding-protein-dependent transport system permease family. FecCD subfamily.

The protein localises to the cell membrane. Its function is as follows. Part of the binding-protein-dependent transport system for heme-iron. Responsible for the translocation of the substrate across the membrane. This is Probable heme-iron transport system permease protein IsdF (isdF) from Staphylococcus aureus (strain MSSA476).